Here is a 357-residue protein sequence, read N- to C-terminus: Low-salt glycan biosynthesis nucleotidyltransferase Agl11 (357 aa).

Mg(2+) contacts are provided by D108 and D221.

It belongs to the glucose-1-phosphate thymidylyltransferase family. It depends on Mg(2+) as a cofactor.

It functions in the pathway protein modification; protein glycosylation. Its pathway is cell surface structure biogenesis; S-layer biogenesis. Functionally, nucleotidyltransferase involved in N-glycan biosynthetic pathway that takes place under low-salt conditions (1.75 M instead of 3.4 M). Participates in the formation of the tetrasaccharide present at 'Asn-532' of S-layer glycoprotein Csg, consisting of a sulfated hexose, 2 hexoses and rhamnose. Involved in the addition of final rhamnose (sugar 4) of the tetrasaccharide on the dolichol phosphate carrier. This chain is Low-salt glycan biosynthesis nucleotidyltransferase Agl11 (agl11), found in Haloferax volcanii (strain ATCC 29605 / DSM 3757 / JCM 8879 / NBRC 14742 / NCIMB 2012 / VKM B-1768 / DS2) (Halobacterium volcanii).